The following is a 950-amino-acid chain: Double-stranded RNA-binding protein Staufen homolog (950 aa).

Disordered stretches follow at residues 25–168 (VSGA…QQQQ), 202–274 (QQQL…QPST), and 288–342 (VTPV…NTKE). Over residues 31–43 (QQRSMMSQQRGGS) the composition is skewed to low complexity. The span at 45–66 (AINSSKSPYQLQTSSISQFSHL) shows a compositional bias: polar residues. A compositionally biased stretch (low complexity) spans 67-77 (QQQQQQQQQQQ). Residues 78–122 (LVNNYHKQKQMSPDITSHQFSSSTGGGMPTQNGNYQSMSGSSIHT) are compositionally biased toward polar residues. 3 stretches are compositionally biased toward low complexity: residues 130-143 (QLSLQHQHHQYSSQ), 153-168 (QQHHYQSQQMTQQQQQ), and 202-253 (QQQL…ILQH). Polar residues predominate over residues 254–274 (SPTSGKSLSSAPHGTSVQPST). Residues 313–322 (SGRDSVHVSD) are compositionally biased toward basic and acidic residues. 4 DRBM domains span residues 344-411 (TPMC…ETKC), 435-546 (TPTV…ILKN), 578-645 (SEIS…ELRK), and 690-758 (NPIS…LLGY). 2 disordered regions span residues 758-833 (YTKP…HTAS) and 922-950 (DIHPGGDGPQVKKDVLARSGSGMKKDFSK). A compositionally biased stretch (polar residues) spans 765–782 (PTKSSFKNPSTGEAGQTN). Positions 922–937 (DIHPGGDGPQVKKDVL) are enriched in basic and acidic residues.

Strongly expressed in nervous tissue (at protein level).

It is found in the perikaryon. It localises to the cell projection. Functionally, RNA-binding protein which is required for syntaxin location in sensory neurons during long-term synaptic facilitation. Binds to syntaxin mRNA and is required to maintain its accumulation at the axon hillock following neuronal stimulation and at the opposite pole in stable unstimulated sensory neurons. In Aplysia californica (California sea hare), this protein is Double-stranded RNA-binding protein Staufen homolog.